Consider the following 329-residue polypeptide: Arylacetonitrilase (329 aa).

The CN hydrolase domain maps to Val-6 to Met-279. The active-site Proton acceptor is Glu-46. Lys-126 is an active-site residue. The Nucleophile role is filled by Cys-161.

Belongs to the carbon-nitrogen hydrolase superfamily. Nitrilase family.

It carries out the reaction a nitrile + 2 H2O = a carboxylate + NH4(+). The catalysed reaction is 4-chlorophenylacetonitrile + 2 H2O = 4-chlorophenylacetate + NH4(+). In terms of biological role, nitrilase that hydrolyzes preferentially phenylacetonitrile and heteroaromatic nitriles, but has significantly lower activity for (R,S)-mandelonitrile. Also acts on dinitriles like phenylenediacetonitriles (PDAs) 1,2-PDA, 1,3-PDA, and 1,4-PDA, and cyanophenyl acetonitriles (CPAs) 2-CPA and 4-CPA. The protein is Arylacetonitrilase of Hypocrea virens (strain Gv29-8 / FGSC 10586) (Gliocladium virens).